A 310-amino-acid polypeptide reads, in one-letter code: tRNA dimethylallyltransferase (310 aa).

15–22 (GATASGKT) provides a ligand contact to ATP. 17–22 (TASGKT) lines the substrate pocket.

Belongs to the IPP transferase family. As to quaternary structure, monomer. Requires Mg(2+) as cofactor.

It carries out the reaction adenosine(37) in tRNA + dimethylallyl diphosphate = N(6)-dimethylallyladenosine(37) in tRNA + diphosphate. In terms of biological role, catalyzes the transfer of a dimethylallyl group onto the adenine at position 37 in tRNAs that read codons beginning with uridine, leading to the formation of N6-(dimethylallyl)adenosine (i(6)A). This is tRNA dimethylallyltransferase from Nocardioides sp. (strain ATCC BAA-499 / JS614).